The sequence spans 191 residues: Pyridoxal 5'-phosphate synthase subunit PdxT (191 aa).

48-50 (GES) is a binding site for L-glutamine. The active-site Nucleophile is Cys81. Residues Arg109 and 136–137 (IR) contribute to the L-glutamine site. Active-site charge relay system residues include His172 and Glu174.

This sequence belongs to the glutaminase PdxT/SNO family. As to quaternary structure, in the presence of PdxS, forms a dodecamer of heterodimers. Only shows activity in the heterodimer.

It carries out the reaction aldehydo-D-ribose 5-phosphate + D-glyceraldehyde 3-phosphate + L-glutamine = pyridoxal 5'-phosphate + L-glutamate + phosphate + 3 H2O + H(+). It catalyses the reaction L-glutamine + H2O = L-glutamate + NH4(+). The protein operates within cofactor biosynthesis; pyridoxal 5'-phosphate biosynthesis. Functionally, catalyzes the hydrolysis of glutamine to glutamate and ammonia as part of the biosynthesis of pyridoxal 5'-phosphate. The resulting ammonia molecule is channeled to the active site of PdxS. The protein is Pyridoxal 5'-phosphate synthase subunit PdxT of Thermus thermophilus (strain ATCC BAA-163 / DSM 7039 / HB27).